A 389-amino-acid chain; its full sequence is Ribonucleoside-diphosphate reductase subunit M2 (389 aa).

Position 20 is a phosphoserine (Ser-20). The residue at position 33 (Thr-33) is a Phosphothreonine. A Cy motif is present at residues 49–51; that stretch reads RRI. Residues Asp-138, Glu-169, and His-172 each coordinate Fe cation. Tyr-176 is an active-site residue. The Fe cation site is built by Glu-232, Glu-266, and His-269.

Belongs to the ribonucleoside diphosphate reductase small chain family. In terms of assembly, heterodimer of a large and a small subunit. Interacts (via Cy motif and when phosphorylated at Thr-33) with CCNF; the interaction occurs exclusively in G2 and early M. It depends on Fe cation as a cofactor. Phosphorylation on Ser-20 relieves the inhibitory effect on Wnt signaling. Phosphorylated on Thr-33 by CDK1 and CDK2; predominantly in G2 and M phase. In terms of processing, ubiquitinated by the SCF(CCNF) E3 ubiquitin-protein ligase complex; leading to its degradation by the proteasome.

The protein localises to the cytoplasm. The protein resides in the nucleus. The catalysed reaction is a 2'-deoxyribonucleoside 5'-diphosphate + [thioredoxin]-disulfide + H2O = a ribonucleoside 5'-diphosphate + [thioredoxin]-dithiol. Functionally, provides the precursors necessary for DNA synthesis. Catalyzes the biosynthesis of deoxyribonucleotides from the corresponding ribonucleotides. Inhibits Wnt signaling. In Homo sapiens (Human), this protein is Ribonucleoside-diphosphate reductase subunit M2 (RRM2).